We begin with the raw amino-acid sequence, 142 residues long: Large ribosomal subunit protein uL13 (142 aa).

This sequence belongs to the universal ribosomal protein uL13 family. As to quaternary structure, part of the 50S ribosomal subunit.

Its function is as follows. This protein is one of the early assembly proteins of the 50S ribosomal subunit, although it is not seen to bind rRNA by itself. It is important during the early stages of 50S assembly. The polypeptide is Large ribosomal subunit protein uL13 (Francisella tularensis subsp. mediasiatica (strain FSC147)).